The following is a 297-amino-acid chain: Cyclin-dependent kinase 1 (297 aa).

M1 carries the N-acetylmethionine modification. Phosphotyrosine; by PKR is present on Y4. A Protein kinase domain is found at 4–287; that stretch reads YIKIEKIGEG…GKMALKHPYF (284 aa). Residues K6 and K9 each carry the N6-acetyllysine; alternate modification. Glycyl lysine isopeptide (Lys-Gly) (interchain with G-Cter in SUMO2); alternate cross-links involve residues K6 and K9. 10–18 is an ATP binding site; sequence IGEGTYGVV. Phosphothreonine is present on T14. The residue at position 15 (Y15) is a Phosphotyrosine; by PKMYT1, WEE1, WEE2 and PKC/PRKCD. Residue Y15 is modified to Phosphotyrosine; by WEE1 and WEE2. Phosphotyrosine is present on Y19. K20 is covalently cross-linked (Glycyl lysine isopeptide (Lys-Gly) (interchain with G-Cter in SUMO2)). Residue K33 coordinates ATP. S39 carries the post-translational modification Phosphoserine. Position 77 is a phosphotyrosine (Y77). Catalysis depends on D128, which acts as the Proton acceptor. K139 participates in a covalent cross-link: Glycyl lysine isopeptide (Lys-Gly) (interchain with G-Cter in SUMO2). T141 carries the post-translational modification Phosphothreonine. A Phosphothreonine; by CAK modification is found at T161. S178 bears the Phosphoserine mark. Phosphothreonine is present on T222. Residue K245 is modified to N6-succinyllysine. The residue at position 248 (S248) is a Phosphoserine.

The protein belongs to the protein kinase superfamily. CMGC Ser/Thr protein kinase family. CDC2/CDKX subfamily. Forms a stable but non-covalent complex with a regulatory subunit and with a cyclin. Interacts with cyclins-B (CCNB1, CCNB2 and CCNB3) to form a serine/threonine kinase holoenzyme complex also known as maturation promoting factor (MPF). The cyclin subunit imparts substrate specificity to the complex. Can also form CDK1-cylin-D and CDK1-cyclin-E complexes that phosphorylate RB1 in vitro. Binds to RB1 and other transcription factors such as FOXO1 and RUNX2. Promotes G2-M transition when in complex with a cyclin-B. Interacts with DLGAP5. Binds to the CDK inhibitors CDKN1A/p21 and CDKN1B/p27. Isoform 2 is unable to complex with cyclin-B1 and also fails to bind to CDKN1A/p21. Interacts with catalytically active CCNB1 and RALBP1 during mitosis to form an endocytotic complex during interphase. Associates with cyclins-A and B1 during S-phase in regenerating hepatocytes. Interacts with FANCC. Interacts with CEP63; this interaction recruits CDK1 to centrosomes. Interacts with CENPA. Interacts with NR1D1. Interacts with proteasome subunit PSMA8; to participate in meiosis progression during spermatogenesis. Phosphorylation at Thr-161 by CAK/CDK7 activates kinase activity. Phosphorylation at Thr-14 and Tyr-15 by PKMYT1 prevents nuclear translocation. Phosphorylation at Tyr-15 by WEE1 and WEE2 inhibits the protein kinase activity and acts as a negative regulator of entry into mitosis (G2 to M transition). Phosphorylation by PKMYT1 and WEE1 takes place during mitosis to keep CDK1-cyclin-B complexes inactive until the end of G2. By the end of G2, PKMYT1 and WEE1 are inactivated, but CDC25A and CDC25B are activated. Dephosphorylation by active CDC25A and CDC25B at Thr-14 and Tyr-15, leads to CDK1 activation at the G2-M transition. Phosphorylation at Tyr-15 by WEE2 during oogenesis is required to maintain meiotic arrest in oocytes during the germinal vesicle (GV) stage, a long period of quiescence at dictyate prophase I, leading to prevent meiotic reentry. Phosphorylation by WEE2 is also required for metaphase II exit during egg activation to ensure exit from meiosis in oocytes and promote pronuclear formation. Phosphorylated at Tyr-4 by PKR/EIF2AK2 upon genotoxic stress. This phosphorylation triggers CDK1 polyubiquitination and subsequent proteolysis, thus leading to G2 arrest. In response to UV irradiation, phosphorylation at Tyr-15 by PRKCD activates the G2/M DNA damage checkpoint. Post-translationally, polyubiquitinated upon genotoxic stress.

It localises to the nucleus. The protein resides in the cytoplasm. The protein localises to the mitochondrion. Its subcellular location is the cytoskeleton. It is found in the microtubule organizing center. It localises to the centrosome. The protein resides in the spindle. It catalyses the reaction L-seryl-[protein] + ATP = O-phospho-L-seryl-[protein] + ADP + H(+). The catalysed reaction is L-threonyl-[protein] + ATP = O-phospho-L-threonyl-[protein] + ADP + H(+). The enzyme catalyses [DNA-directed RNA polymerase] + ATP = phospho-[DNA-directed RNA polymerase] + ADP + H(+). Phosphorylation at Thr-14 or Tyr-15 inactivates the enzyme, while phosphorylation at Thr-161 activates it. Activated through a multistep process; binding to cyclin-B is required for relocation of cyclin-kinase complexes to the nucleus, activated by CAK/CDK7-mediated phosphorylation on Thr-161, and CDC25-mediated dephosphorylation of inhibitory phosphorylation on Thr-14 and Tyr-15. Activity is restricted during S-phase in an ATR-dependent manner to prevent premature entry into G2. Repressed by the CDK inhibitors CDKN1A/p21 and CDKN1B/p27 during the G1 phase and by CDKN1A/p21 at the G1-S checkpoint upon DNA damage. Transient activation by rapid and transient dephosphorylation at Tyr-15 triggered by TGFB1. Plays a key role in the control of the eukaryotic cell cycle by modulating the centrosome cycle as well as mitotic onset; promotes G2-M transition via association with multiple interphase cyclins. Phosphorylates PARVA/actopaxin, APC, AMPH, APC, BARD1, Bcl-xL/BCL2L1, BRCA2, CALD1, CASP8, CDC7, CDC20, CDC25A, CDC25C, CC2D1A, CENPA, CSNK2 proteins/CKII, FZR1/CDH1, CDK7, CEBPB, CHAMP1, DMD/dystrophin, EEF1 proteins/EF-1, EZH2, KIF11/EG5, EGFR, FANCG, FOS, GFAP, GOLGA2/GM130, GRASP1, UBE2A/hHR6A, HIST1H1 proteins/histone H1, HMGA1, HIVEP3/KRC, KAT5, LMNA, LMNB, LBR, MKI67, LATS1, MAP1B, MAP4, MARCKS, MCM2, MCM4, MKLP1, MLST8, MYB, NEFH, NFIC, NPC/nuclear pore complex, PITPNM1/NIR2, NPM1, NCL, NUCKS1, NPM1/numatrin, ORC1, PRKAR2A, EEF1E1/p18, EIF3F/p47, p53/TP53, NONO/p54NRB, PAPOLA, PLEC/plectin, RB1, TPPP, UL40/R2, RAB4A, RAP1GAP, RBBP8/CtIP, RCC1, RPS6KB1/S6K1, KHDRBS1/SAM68, ESPL1, SKI, BIRC5/survivin, STIP1, TEX14, beta-tubulins, MAPT/TAU, NEDD1, VIM/vimentin, TK1, FOXO1, RUNX1/AML1, SAMHD1, SIRT2, CGAS, ZAR1 and RUNX2. CDK1/CDC2-cyclin-B controls pronuclear union in interphase fertilized eggs. Essential for early stages of embryonic development. During G2 and early mitosis, CDC25A/B/C-mediated dephosphorylation activates CDK1/cyclin complexes which phosphorylate several substrates that trigger at least centrosome separation, Golgi dynamics, nuclear envelope breakdown and chromosome condensation. Once chromosomes are condensed and aligned at the metaphase plate, CDK1 activity is switched off by WEE1- and PKMYT1-mediated phosphorylation to allow sister chromatid separation, chromosome decondensation, reformation of the nuclear envelope and cytokinesis. Phosphorylates KRT5 during prometaphase and metaphase. Inactivated by PKR/EIF2AK2- and WEE1-mediated phosphorylation upon DNA damage to stop cell cycle and genome replication at the G2 checkpoint thus facilitating DNA repair. Reactivated after successful DNA repair through WIP1-dependent signaling leading to CDC25A/B/C-mediated dephosphorylation and restoring cell cycle progression. Catalyzes lamin (LMNA, LMNB1 and LMNB2) phosphorylation at the onset of mitosis, promoting nuclear envelope breakdown. In proliferating cells, CDK1-mediated FOXO1 phosphorylation at the G2-M phase represses FOXO1 interaction with 14-3-3 proteins and thereby promotes FOXO1 nuclear accumulation and transcription factor activity, leading to cell death of postmitotic neurons. The phosphorylation of beta-tubulins regulates microtubule dynamics during mitosis. NEDD1 phosphorylation promotes PLK1-mediated NEDD1 phosphorylation and subsequent targeting of the gamma-tubulin ring complex (gTuRC) to the centrosome, an important step for spindle formation. In addition, CC2D1A phosphorylation regulates CC2D1A spindle pole localization and association with SCC1/RAD21 and centriole cohesion during mitosis. The phosphorylation of Bcl-xL/BCL2L1 after prolongated G2 arrest upon DNA damage triggers apoptosis. In contrast, CASP8 phosphorylation during mitosis prevents its activation by proteolysis and subsequent apoptosis. This phosphorylation occurs in cancer cell lines, as well as in primary breast tissues and lymphocytes. EZH2 phosphorylation promotes H3K27me3 maintenance and epigenetic gene silencing. CALD1 phosphorylation promotes Schwann cell migration during peripheral nerve regeneration. CDK1-cyclin-B complex phosphorylates NCKAP5L and mediates its dissociation from centrosomes during mitosis. Regulates the amplitude of the cyclic expression of the core clock gene BMAL1 by phosphorylating its transcriptional repressor NR1D1, and this phosphorylation is necessary for SCF(FBXW7)-mediated ubiquitination and proteasomal degradation of NR1D1. Phosphorylates EML3 at 'Thr-881' which is essential for its interaction with HAUS augmin-like complex and TUBG1. Phosphorylates CGAS during mitosis, leading to its inhibition, thereby preventing CGAS activation by self DNA during mitosis. Phosphorylates SKA3 during mitosis which promotes SKA3 binding to the NDC80 complex and anchoring of the SKA complex to kinetochores, to enable stable attachment of mitotic spindle microtubules to kinetochores. This chain is Cyclin-dependent kinase 1 (Cdk1), found in Mus musculus (Mouse).